The sequence spans 191 residues: Large ribosomal subunit protein uL6A (191 aa).

The protein belongs to the universal ribosomal protein uL6 family. Component of the large ribosomal subunit (LSU). Mature yeast ribosomes consist of a small (40S) and a large (60S) subunit. The 40S small subunit contains 1 molecule of ribosomal RNA (18S rRNA) and 33 different proteins (encoded by 57 genes). The large 60S subunit contains 3 rRNA molecules (25S, 5.8S and 5S rRNA) and 46 different proteins (encoded by 81 genes). uL6 lines the binding pocket for eukaryotic elongation factor 2 (eEF2).

The protein localises to the cytoplasm. Component of the ribosome, a large ribonucleoprotein complex responsible for the synthesis of proteins in the cell. The small ribosomal subunit (SSU) binds messenger RNAs (mRNAs) and translates the encoded message by selecting cognate aminoacyl-transfer RNA (tRNA) molecules. The large subunit (LSU) contains the ribosomal catalytic site termed the peptidyl transferase center (PTC), which catalyzes the formation of peptide bonds, thereby polymerizing the amino acids delivered by tRNAs into a polypeptide chain. The nascent polypeptides leave the ribosome through a tunnel in the LSU and interact with protein factors that function in enzymatic processing, targeting, and the membrane insertion of nascent chains at the exit of the ribosomal tunnel. The chain is Large ribosomal subunit protein uL6A from Saccharomyces cerevisiae (strain ATCC 204508 / S288c) (Baker's yeast).